We begin with the raw amino-acid sequence, 431 residues long: tRNA (adenine(37)-N6)-methyltransferase (431 aa).

Positions 30–168 (TEPIGYLESC…YIADYDSPQN (139 aa)) constitute a TsaA-like domain. S-adenosyl-L-methionine-binding positions include 47–49 (PRQ), 90–91 (HK), R117, L127, and 148–151 (IHGT). 2 disordered regions span residues 167-189 (QNLE…ATAN) and 201-243 (KAQP…DRER). A compositionally biased stretch (basic and acidic residues) spans 207–243 (STKEKPKCREHRTSDENSQKFRDTSEIQHTLPEDRER).

It belongs to the tRNA methyltransferase O family.

The catalysed reaction is N(6)-L-threonylcarbamoyladenosine(37) in tRNA + S-adenosyl-L-methionine = N(6)-methyl,N(6)-L-threonylcarbamoyladenosine(37) in tRNA + S-adenosyl-L-homocysteine + H(+). In terms of biological role, S-adenosyl-L-methionine-dependent methyltransferase responsible for the addition of the methyl group in the formation of N6-methyl-N6-threonylcarbamoyladenosine at position 37 (m(6)t(6)A37) of the tRNA anticodon loop of tRNA(Ser)(GCU). The methyl group of m(6)t(6)A37 may improve the efficiency of the tRNA decoding ability. May bind to tRNA. The protein is tRNA (adenine(37)-N6)-methyltransferase of Rattus norvegicus (Rat).